A 156-amino-acid polypeptide reads, in one-letter code: Small ribosomal subunit protein uS7 (156 aa).

Belongs to the universal ribosomal protein uS7 family. In terms of assembly, part of the 30S ribosomal subunit. Contacts proteins S9 and S11.

Functionally, one of the primary rRNA binding proteins, it binds directly to 16S rRNA where it nucleates assembly of the head domain of the 30S subunit. Is located at the subunit interface close to the decoding center, probably blocks exit of the E-site tRNA. The polypeptide is Small ribosomal subunit protein uS7 (Pasteurella multocida (strain Pm70)).